Here is a 456-residue protein sequence, read N- to C-terminus: RuvB-like helicase 1 (456 aa).

70–77 is a binding site for ATP; that stretch reads GPPGTGKT.

It belongs to the RuvB family. As to quaternary structure, forms homohexameric rings. May form a dodecamer with rept made of two stacked hexameric rings. Component of the chromatin remodeling Ino80 complex. Interacts with Myc and rept. Higher expression occurs in primordia of mesoderm, anterior and posterior midgut and cephalic furrow early in gastrulation, as well as in endoderm and mesoderm lineages during germ band extension. Later in development expression is only maintained in endoderm cells. Expressed in thoracic and abdominal segment neural precursors of all embryonic chordotonal organs.

It is found in the nucleus. The catalysed reaction is ATP + H2O = ADP + phosphate + H(+). Functionally, acts as a transcriptional coactivator in Wg signaling caused by altered arm signaling. Pont and rept interfere antagonistically with nuclear arm signaling function, and are required to enhance or reduce arm activity, respectively. Also an essential cofactor for the normal function of Myc; required for cellular proliferation and growth. Proposed core component of the chromatin remodeling Ino80 complex which is involved in transcriptional regulation, DNA replication and probably DNA repair. The polypeptide is RuvB-like helicase 1 (Drosophila melanogaster (Fruit fly)).